Consider the following 90-residue polypeptide: Acylphosphatase (90 aa).

An Acylphosphatase-like domain is found at 3–90 (KKQFIVYGLV…REFTDFSVRY (88 aa)). Active-site residues include Arg18 and Asn36.

The protein belongs to the acylphosphatase family.

The catalysed reaction is an acyl phosphate + H2O = a carboxylate + phosphate + H(+). The chain is Acylphosphatase (acyP) from Pasteurella multocida (strain Pm70).